The primary structure comprises 257 residues: Type I iodothyronine deiodinase (257 aa).

The Extracellular segment spans residues 1–12 (MGLPGLGLLLKR). A helical; Signal-anchor for type III membrane protein membrane pass occupies residues 13 to 33 (FGVLVRVALKVAVGKVLLTLW). At 34–257 (PSAIRPHLLA…CRSSAQSPRL (224 aa)) the chain is on the cytoplasmic side. U126 is a catalytic residue. A non-standard amino acid (selenocysteine) is located at residue U126.

This sequence belongs to the iodothyronine deiodinase family. Predominantly monomer. Can form homodimers but homodimerization is not essential for enzyme activity. Liver specific.

It localises to the cell membrane. It is found in the endoplasmic reticulum membrane. The protein resides in the basolateral cell membrane. The catalysed reaction is 3,3',5-triiodo-L-thyronine + iodide + A + H(+) = L-thyroxine + AH2. It carries out the reaction 3,3',5'-triiodo-L-thyronine + iodide + A + H(+) = L-thyroxine + AH2. The enzyme catalyses 3,3'-diiodo-L-thyronine + iodide + A + H(+) = 3,3',5'-triiodo-L-thyronine + AH2. It catalyses the reaction 3,3'-diiodo-L-thyronine + iodide + A + H(+) = 3,3',5-triiodo-L-thyronine + AH2. The catalysed reaction is 3'-iodo-L-thyronine + iodide + A + H(+) = 3',5'-diiodo-L-thyronine + AH2. It carries out the reaction 3-iodo-L-thyronine + iodide + A + H(+) = 3,5-diiodo-L-thyronine + AH2. The enzyme catalyses 3-iodo-L-thyronine + iodide + A + H(+) = 3,3'-diiodo-L-thyronine + AH2. It catalyses the reaction 3,3'-diiodothyronamine + iodide + A + H(+) = 3,3',5'-triiodothyronamine + AH2. The catalysed reaction is 3'-iodothyronamine + iodide + A + H(+) = 3',5'-diiodothyronamine + AH2. It carries out the reaction 3-iodothyronamine + iodide + A + H(+) = 3,3'-diiodothyronamine + AH2. The enzyme catalyses 3,3'-diiodothyronamine + iodide + A + H(+) = 3,3',5-triiodothyronamine + AH2. It catalyses the reaction 3-iodothyronamine + iodide + A + H(+) = 3,5-diiodothyronamine + AH2. The catalysed reaction is 3,3'-diiodo-L-thyronine sulfate + iodide + A + H(+) = 3,3',5'-triiodo-L-thyronine sulfate + AH2. It carries out the reaction 3,3',5'-triiodo-L-thyronine sulfate + iodide + A + H(+) = L-thyroxine sulfate + AH2. The enzyme catalyses 3,3'-diiodo-L-thyronine sulfate + iodide + A + H(+) = 3,3',5-triiodo-L-thyronine sulfate + AH2. Its function is as follows. Plays a crucial role in the metabolism of thyroid hormones (TH) and has specific roles in TH activation and inactivation by deiodination. Catalyzes the deiodination of L-thyroxine (T4) to 3,5,3'-triiodothyronine (T3) and 3',5'-diiodothyronine (3',5'-T2) to 3'-monoiodothyronine (3'-T1) via outer-ring deiodination (ORD). Catalyzes the deiodination of T4 to 3,3',5'-triiodothyronine (rT3), T3 to 3,3'-diiodothyronine (3,3'-T2), 3,5-diiodothyronine (3,5-T2) to 3-monoiodothyronine (3-T1) and 3,3'-T2 to 3-T1 via inner-ring deiodination (IRD). Catalyzes the deiodination of rT3 to 3,3'-T2 via ORD. Catalyzes the phenolic ring deiodinations of 3,3',5'-triiodothyronamine, 3',5'-diiodothyronamine and 3,3'-diiodothyronamine as well as tyrosyl ring deiodinations of 3,5,3'-triiodothyronamine and 3,5-diiodothyronamine. Catalyzes the deiodination of L-thyroxine sulfate and 3,3',5-triiodo-L-thyronine sulfate via IRD and of 3,3',5'-triiodo-L-thyronine sulfate via ORD. The protein is Type I iodothyronine deiodinase (DIO1) of Suncus murinus (Asian house shrew).